Reading from the N-terminus, the 192-residue chain is Protein GrpE (192 aa).

A disordered region spans residues 1–34; the sequence is MSSKEQKTPNEQVSEEMENTAEQQVEATQETGEC. A compositionally biased stretch (polar residues) spans 20–31; sequence TAEQQVEATQET.

This sequence belongs to the GrpE family. Homodimer.

The protein localises to the cytoplasm. Its function is as follows. Participates actively in the response to hyperosmotic and heat shock by preventing the aggregation of stress-denatured proteins, in association with DnaK and GrpE. It is the nucleotide exchange factor for DnaK and may function as a thermosensor. Unfolded proteins bind initially to DnaJ; upon interaction with the DnaJ-bound protein, DnaK hydrolyzes its bound ATP, resulting in the formation of a stable complex. GrpE releases ADP from DnaK; ATP binding to DnaK triggers the release of the substrate protein, thus completing the reaction cycle. Several rounds of ATP-dependent interactions between DnaJ, DnaK and GrpE are required for fully efficient folding. The chain is Protein GrpE from Yersinia pestis.